The sequence spans 319 residues: tRNA uridine(34) hydroxylase (319 aa).

In terms of domain architecture, Rhodanese spans 125-219 (LDENTVVIDA…YGKDPEVQGD (95 aa)). Cys-179 serves as the catalytic Cysteine persulfide intermediate.

It belongs to the TrhO family.

It catalyses the reaction uridine(34) in tRNA + AH2 + O2 = 5-hydroxyuridine(34) in tRNA + A + H2O. Catalyzes oxygen-dependent 5-hydroxyuridine (ho5U) modification at position 34 in tRNAs. The chain is tRNA uridine(34) hydroxylase from Lactococcus lactis subsp. cremoris (strain MG1363).